The chain runs to 620 residues: Glutathione-regulated potassium-efflux system protein KefC (620 aa).

The Periplasmic segment spans residues 1-3 (MDS). A helical transmembrane segment spans residues 4 to 24 (HTLIQALIYLGSAALIVPIAV). A topological domain (cytoplasmic) is located at residue arginine 25. A helical transmembrane segment spans residues 26-46 (LGLGSVLGYLIAGCIIGPWGL). Over 47 to 53 (RLVTDAE) the chain is Periplasmic. Residues 54–74 (SILHFAEIGVVLMLFIIGLEL) traverse the membrane as a helical segment. Topologically, residues 75 to 89 (DPQRLWKLRAAVFGG) are cytoplasmic. Residues 90–110 (GALQMVICGGLLGLFCMLLGL) form a helical membrane-spanning segment. Residues 111–113 (RWQ) are Periplasmic-facing. A helical transmembrane segment spans residues 114 to 134 (VAELIGMTLALSSTAIAMQAM). Over 135–148 (NERNLMVTQMGRSA) the chain is Cytoplasmic. Residues 149 to 169 (FAVLLFQDIAAIPLVAMIPLL) form a helical membrane-spanning segment. At 170–177 (AASSASTT) the chain is on the periplasmic side. A helical transmembrane segment spans residues 178–198 (MGAFVLSALKVAGALALVVLL). Residues 199-213 (GRYVTRPALRFVARS) lie on the Cytoplasmic side of the membrane. Residues 214-233 (GLREVFSAVALFLVFGFGLL) form a helical membrane-spanning segment. The Periplasmic portion of the chain corresponds to 234–236 (LEE). Residues 237-254 (VGLSMAMGAFLAGVLLAS) form a helical membrane-spanning segment. The Cytoplasmic portion of the chain corresponds to 255–269 (SEYRHALESDIEPFK). The helical transmembrane segment at 270–290 (GLLLGLFFIGVGMSIDFGTLL) threads the bilayer. The Periplasmic portion of the chain corresponds to 291-293 (ENP). The chain crosses the membrane as a helical span at residues 294 to 314 (LRIVILLLGFLIIKIAMLWLI). Over 315 to 326 (ARPLQVPNKQRR) the chain is Cytoplasmic. Residues 327-347 (WFAVLLGQGSEFAFVVFGAAQ) traverse the membrane as a helical segment. The Periplasmic segment spans residues 348–358 (MANVLEPEWAK). A helical membrane pass occupies residues 359–379 (SLTLAVALSMAATPILLVILN). The Cytoplasmic segment spans residues 380 to 620 (RLEQSSTEEA…ADEPETKPSS (241 aa)). Positions 399 to 518 (QPRVIIAGFG…AGVEKPERET (120 aa)) constitute an RCK N-terminal domain. Residues 597–620 (GWQGTEEGKHTGNMADEPETKPSS) are disordered.

This sequence belongs to the monovalent cation:proton antiporter 2 (CPA2) transporter (TC 2.A.37) family. KefC subfamily. As to quaternary structure, homodimer. Interacts with the regulatory subunit KefF.

The protein resides in the cell inner membrane. Its function is as follows. Pore-forming subunit of a potassium efflux system that confers protection against electrophiles. Catalyzes K(+)/H(+) antiport. The protein is Glutathione-regulated potassium-efflux system protein KefC of Escherichia coli O6:H1 (strain CFT073 / ATCC 700928 / UPEC).